An 891-amino-acid polypeptide reads, in one-letter code: Aconitate hydratase A (891 aa).

[4Fe-4S] cluster is bound by residues Cys-435, Cys-501, and Cys-504.

This sequence belongs to the aconitase/IPM isomerase family. As to quaternary structure, monomer. Requires [4Fe-4S] cluster as cofactor.

It carries out the reaction citrate = D-threo-isocitrate. The catalysed reaction is (2S,3R)-3-hydroxybutane-1,2,3-tricarboxylate = 2-methyl-cis-aconitate + H2O. It functions in the pathway carbohydrate metabolism; tricarboxylic acid cycle; isocitrate from oxaloacetate: step 2/2. Its pathway is organic acid metabolism; propanoate degradation. In terms of biological role, involved in the catabolism of short chain fatty acids (SCFA) via the tricarboxylic acid (TCA)(acetyl degradation route) and the 2-methylcitrate cycle I (propionate degradation route). Catalyzes the reversible isomerization of citrate to isocitrate via cis-aconitate. Also catalyzes the hydration of 2-methyl-cis-aconitate to yield (2R,3S)-2-methylisocitrate. The (2S,3S)-2-methylcitrate (2-MC) is a very poor substrate. The apo form of AcnA functions as a RNA-binding regulatory protein. This Salmonella typhimurium (strain LT2 / SGSC1412 / ATCC 700720) protein is Aconitate hydratase A (acnA).